The primary structure comprises 400 residues: Argininosuccinate synthase (400 aa).

ATP-binding positions include 10 to 18 (AYSGGVDTS) and Ala-38. L-citrulline is bound at residue Tyr-89. Residue Gly-119 coordinates ATP. Residues Thr-121, Asn-125, and Asp-126 each contribute to the L-aspartate site. Asn-125 lines the L-citrulline pocket. Residues Arg-129, Ser-177, Ser-186, Glu-262, and Tyr-274 each coordinate L-citrulline.

The protein belongs to the argininosuccinate synthase family. Type 1 subfamily. In terms of assembly, homotetramer.

It localises to the cytoplasm. It carries out the reaction L-citrulline + L-aspartate + ATP = 2-(N(omega)-L-arginino)succinate + AMP + diphosphate + H(+). Its pathway is amino-acid biosynthesis; L-arginine biosynthesis; L-arginine from L-ornithine and carbamoyl phosphate: step 2/3. The sequence is that of Argininosuccinate synthase from Prochlorococcus marinus (strain NATL1A).